Reading from the N-terminus, the 173-residue chain is NADH-quinone oxidoreductase subunit B (173 aa).

Positions 46, 47, 112, and 142 each coordinate [4Fe-4S] cluster.

Belongs to the complex I 20 kDa subunit family. In terms of assembly, NDH-1 is composed of 14 different subunits. Subunits NuoB, C, D, E, F, and G constitute the peripheral sector of the complex. It depends on [4Fe-4S] cluster as a cofactor.

It localises to the cell membrane. The catalysed reaction is a quinone + NADH + 5 H(+)(in) = a quinol + NAD(+) + 4 H(+)(out). Its function is as follows. NDH-1 shuttles electrons from NADH, via FMN and iron-sulfur (Fe-S) centers, to quinones in the respiratory chain. The immediate electron acceptor for the enzyme in this species is believed to be a menaquinone. Couples the redox reaction to proton translocation (for every two electrons transferred, four hydrogen ions are translocated across the cytoplasmic membrane), and thus conserves the redox energy in a proton gradient. The chain is NADH-quinone oxidoreductase subunit B from Desulfitobacterium hafniense (strain DSM 10664 / DCB-2).